Reading from the N-terminus, the 431-residue chain is Reverse prenyltransferase criA (431 aa).

Dimethylallyl diphosphate-binding residues include arginine 104, lysine 193, tyrosine 195, lysine 262, tyrosine 264, tyrosine 347, tyrosine 412, and tyrosine 416.

This sequence belongs to the tryptophan dimethylallyltransferase family. In terms of assembly, monomer.

The catalysed reaction is cyclo(L-tryptophyl-L-alanyl) + dimethylallyl diphosphate = preechinulin + diphosphate. It functions in the pathway secondary metabolite biosynthesis. The protein operates within alkaloid biosynthesis. Functionally, reverse prenyltransferase; part of the gene cluster that mediates the biosynthesis of echinulin family alkaloid. The pathway begins with the biosynthesis of the cyclic dipeptide cyclo-L-Trp-L-Ala (cyclo-TA) by the NRPS criC via condensation of L-alanine and L-tryptophan. The prenyltransferase criA then catalyzes the first prenylation step, a reverse prenylation reaction at C2, to yield preechinulin. Preechinulin is the substrate of the cytochrome P450 monooxygenase criE that catalyzes the formation of the double bond between C10 and C11 to produce neoechulin A. The unique prenyltransferase criF functions as a competitive enzyme with criE for preechinulin metabolization and uses preechinulin for effective regiospecific prenylations. Preechinulin is prenylated by criF at C5 or C7. C7-prenylation leads to accumulation of tardioxopiperazine B without further modification by criF. In contrast, the C5-prenylated tardioxopiperazine A can be prenylated again by criF, predominantly at C7 to form echinulin or less frequently at C4 to give variecolorin L. CriF also accepts neoechilunin A to produce varlecolorin G (prenylation at C5) or isoechinulin A (prenylation at C7). CriF further converts isoechinulin A into dehydroechinulin. Moreover, a yet unidentified enzyme can also convert neoechilunin A into neoechilunin B by introducing a double bond between positions C14 and C17 and thus provides a further substrate to criF for C5 and C7 prenylation. The protein is Reverse prenyltransferase criA of Aspergillus cristatus (Chinese Fuzhuan brick tea-fermentation fungus).